Consider the following 457-residue polypeptide: Glycerol-3-phosphate acyltransferase 3 (457 aa).

The helical transmembrane segment at 14–34 threads the bilayer; the sequence is WLTLVGSLILLPSAFGLSLGI. Phosphoserine is present on residues Ser-68 and Ser-77. The next 2 membrane-spanning stretches (helical) occupy residues 137 to 157 and 161 to 181; these read ISPK…CFLL and VTLA…VGQL. Positions 229–234 match the HXXXXD motif motif; sequence HTSPID. The interval 429 to 457 is disordered; the sequence is GNGSPSLALDSSTVDNHGSPEPAFRSESL. Residues 431–444 show a composition bias toward polar residues; the sequence is GSPSLALDSSTVDN.

The protein belongs to the 1-acyl-sn-glycerol-3-phosphate acyltransferase family.

The protein localises to the endoplasmic reticulum membrane. It carries out the reaction sn-glycerol 3-phosphate + an acyl-CoA = a 1-acyl-sn-glycero-3-phosphate + CoA. It catalyses the reaction a 1-acyl-sn-glycero-3-phosphate + an acyl-CoA = a 1,2-diacyl-sn-glycero-3-phosphate + CoA. The enzyme catalyses dodecanoyl-CoA + sn-glycerol 3-phosphate = 1-dodecanoyl-sn-glycerol 3-phosphate + CoA. The catalysed reaction is sn-glycerol 3-phosphate + hexadecanoyl-CoA = 1-hexadecanoyl-sn-glycero-3-phosphate + CoA. It carries out the reaction sn-glycerol 3-phosphate + (9Z)-octadecenoyl-CoA = 1-(9Z-octadecenoyl)-sn-glycero-3-phosphate + CoA. It catalyses the reaction (9Z,12Z)-octadecadienoyl-CoA + sn-glycerol 3-phosphate = 1-(9Z,12Z)-octadecadienoyl-sn-glycero-3-phosphate + CoA. The enzyme catalyses 1-tetradecanoyl-sn-glycerol 3-phosphate + (9Z)-octadecenoyl-CoA = 1-tetradecanoyl-2-(9Z)-octadecenoyl-sn-glycero-3-phosphate + CoA. The catalysed reaction is 1-hexadecanoyl-sn-glycero-3-phosphate + (9Z)-octadecenoyl-CoA = 1-hexadecanoyl-2-(9Z-octadecenoyl)-sn-glycero-3-phosphate + CoA. It carries out the reaction 1-(9Z-octadecenoyl)-sn-glycero-3-phosphate + (9Z)-octadecenoyl-CoA = 1,2-di-(9Z-octadecenoyl)-sn-glycero-3-phosphate + CoA. It catalyses the reaction 1-(6Z,9Z,12Z-octadecatrienoyl)-sn-glycero-3-phosphate + (9Z)-octadecenoyl-CoA = (6Z,9Z,12Z)-octadecatrienoyl-2-(9Z)-octadecenoyl-sn-glycero-3-phosphate + CoA. The enzyme catalyses 1-(9Z,12Z,15Z)-octadecatrienoyl-sn-glycero-3-phosphate + (9Z)-octadecenoyl-CoA = 1-(9Z,12Z,15Z)-octadecatrienoyl-2-(9Z)-octadecenoyl-sn-glycero-3-phosphate + CoA. The catalysed reaction is 1-(9Z-octadecenoyl)-sn-glycero-3-phosphate + tetradecanoyl-CoA = 1-(9Z)-octadecenoyl-2-tetradecanoyl-sn-glycero-3-phosphate + CoA. It carries out the reaction 1-(9Z-octadecenoyl)-sn-glycero-3-phosphate + hexadecanoyl-CoA = 1-(9Z)-octadecenoyl-2-hexadecanoyl-sn-glycero-3-phosphate + CoA. It catalyses the reaction 1-(9Z-octadecenoyl)-sn-glycero-3-phosphate + octadecanoyl-CoA = 1-(9Z-octadecenoyl)-2-octadecanoyl-sn-glycero-3-phosphate + CoA. The enzyme catalyses 1-(9Z-octadecenoyl)-sn-glycero-3-phosphate + (9Z,12Z)-octadecadienoyl-CoA = 1-(9Z)-octadecenoyl-2-(9Z,12Z)-octadecadienoyl-sn-glycero-3-phosphate + CoA. The catalysed reaction is 1-(5Z,8Z,11Z,14Z-eicosatetraenoyl)-sn-glycero-3-phosphate + (9Z)-octadecenoyl-CoA = 1-(5Z,8Z,11Z,14Z)-eicosatetraenoyl-2-(9Z)-octadecenoyl-sn-glycero-3-phosphate + CoA. Its pathway is glycerolipid metabolism; triacylglycerol biosynthesis. It functions in the pathway phospholipid metabolism; CDP-diacylglycerol biosynthesis; CDP-diacylglycerol from sn-glycerol 3-phosphate: step 1/3. Its function is as follows. Converts glycerol-3-phosphate to 1-acyl-sn-glycerol-3-phosphate (lysophosphatidic acid or LPA) by incorporating an acyl moiety at the sn-1 position of the glycerol backbone. Also converts LPA into 1,2-diacyl-sn-glycerol-3-phosphate (phosphatidic acid or PA) by incorporating an acyl moiety at the sn-2 position of the glycerol backbone. Protects cells against lipotoxicity. The sequence is that of Glycerol-3-phosphate acyltransferase 3 from Rattus norvegicus (Rat).